Here is a 310-residue protein sequence, read N- to C-terminus: ADP-L-glycero-D-manno-heptose-6-epimerase (310 aa).

Residues 10 to 11 (FI), 31 to 32 (DN), Lys38, Lys53, 75 to 79 (EGACS), and Asn92 contribute to the NADP(+) site. Tyr140 acts as the Proton acceptor in catalysis. Residue Lys144 coordinates NADP(+). Asn169 provides a ligand contact to substrate. The NADP(+) site is built by Val170 and Lys178. The active-site Proton acceptor is the Lys178. Residues Ser180, His187, 201–204 (FEGS), Arg209, and Tyr272 each bind substrate.

It belongs to the NAD(P)-dependent epimerase/dehydratase family. HldD subfamily. As to quaternary structure, homopentamer. NADP(+) is required as a cofactor.

It carries out the reaction ADP-D-glycero-beta-D-manno-heptose = ADP-L-glycero-beta-D-manno-heptose. The protein operates within nucleotide-sugar biosynthesis; ADP-L-glycero-beta-D-manno-heptose biosynthesis; ADP-L-glycero-beta-D-manno-heptose from D-glycero-beta-D-manno-heptose 7-phosphate: step 4/4. Its function is as follows. Catalyzes the interconversion between ADP-D-glycero-beta-D-manno-heptose and ADP-L-glycero-beta-D-manno-heptose via an epimerization at carbon 6 of the heptose. The polypeptide is ADP-L-glycero-D-manno-heptose-6-epimerase (Citrobacter koseri (strain ATCC BAA-895 / CDC 4225-83 / SGSC4696)).